The following is a 930-amino-acid chain: Short transient receptor potential channel 6 (930 aa).

The disordered stretch occupies residues 1-27; the sequence is MSQSPRFVTRRGGSLKAAPGAGTRRNE. At 1-437 the chain is on the cytoplasmic side; the sequence is MSQSPRFVTR…CSKMGKILRG (437 aa). 4 ANK repeats span residues 96 to 125, 131 to 160, 162 to 188, and 217 to 246; these read IEEERFLDAAEYGNIPVVRKMLEECHSLNV, MGQNALQLAVANEHLEITELLLKKENLSRV, DALLLAISKGYVRIVEAILNHPAFAEG, and HDVTPIILAAHCQEYEIVHTLLRKGARIER. A helical membrane pass occupies residues 438-458; it reads PFMKFVAHAASFTIFLGLLVM. The Extracellular portion of the chain corresponds to 459 to 486; the sequence is NAADRFEGTKLLPNETSTDNARQLFRMK. The helical transmembrane segment at 487–507 threads the bilayer; that stretch reads TSCFSWMEMLIISWVIGMIWA. At 508–520 the chain is on the cytoplasmic side; it reads ECKEIWTQGPKEY. A helical membrane pass occupies residues 521-541; that stretch reads LFELWNMLDFGMLAIFAASFI. Residues 542–591 are Extracellular-facing; sequence ARFMAFWHASKAQSIIDANDTLKDLTKVTLGDNVKYYNLARIKWDPTDPQ. N-linked (GlcNAc...) asparagine glycosylation is present at Asn560. Residues 592-612 traverse the membrane as a helical segment; it reads IISEGLYAIAVVLSFSRIAYI. Residues 613-635 lie on the Cytoplasmic side of the membrane; sequence LPANESFGPLQISLGRTVKDIFK. The helical transmembrane segment at 636–656 threads the bilayer; sequence FMVIFIMVFVAFMIGMFNLYS. The Extracellular portion of the chain corresponds to 657–705; that stretch reads YYIGAKQNEAFTTVEESFKTLFWAIFGLSEVKSVVINYNHKFIENIGYV. The helical transmembrane segment at 706–726 threads the bilayer; sequence LYGVYNVTMVIVLLNMLIAMI. At 727–930 the chain is on the cytoplasmic side; the sequence is NSSFQEIEDD…LEPKLEESRR (204 aa). Ser814 carries the phosphoserine modification.

This sequence belongs to the transient receptor (TC 1.A.4) family. STrpC subfamily. TRPC6 sub-subfamily. As to quaternary structure, homodimer; forms channel complex. Interacts with MX1 and RNF24. Post-translationally, phosphorylated by FYN, leading to an increase of TRPC6 channel activity. In terms of processing, N-glycosylated. In terms of tissue distribution, lung and brain.

Its subcellular location is the cell membrane. It catalyses the reaction Ca(2+)(in) = Ca(2+)(out). In terms of biological role, forms a receptor-activated non-selective calcium permeant cation channel. Probably is operated by a phosphatidylinositol second messenger system activated by receptor tyrosine kinases or G-protein coupled receptors. Activated by diacylglycerol (DAG) in a membrane-delimited fashion, independently of protein kinase C. Seems not to be activated by intracellular calcium store depletion. The polypeptide is Short transient receptor potential channel 6 (Mus musculus (Mouse)).